Consider the following 102-residue polypeptide: SCYNPCLPRSSCGPTPLANSCNEPCLFRQCQDSTVVIEPSPVVVTLPGPILSSFPQNTVVGGSSTSAAVGSILSSQGVPISSGGFNLSGLSGRYSGARCLPC.

Ser-1 carries the post-translational modification N-acetylserine.

This sequence belongs to the avian keratin family. The avian keratins (F-ker, S-ker, C-ker and B-ker) are a complex mixture of very similar polypeptides.

The protein is Feather keratin of Dromaius novaehollandiae (Emu).